The primary structure comprises 291 residues: ATP synthase gamma chain (291 aa).

This sequence belongs to the ATPase gamma chain family. F-type ATPases have 2 components, CF(1) - the catalytic core - and CF(0) - the membrane proton channel. CF(1) has five subunits: alpha(3), beta(3), gamma(1), delta(1), epsilon(1). CF(0) has three main subunits: a, b and c.

Its subcellular location is the cell inner membrane. Its function is as follows. Produces ATP from ADP in the presence of a proton gradient across the membrane. The gamma chain is believed to be important in regulating ATPase activity and the flow of protons through the CF(0) complex. The sequence is that of ATP synthase gamma chain from Sinorhizobium medicae (strain WSM419) (Ensifer medicae).